The sequence spans 967 residues: Isoleucine--tRNA ligase 2 (967 aa).

The 'HIGH' region signature appears at 58 to 68 (PYANGDIHIGH). The segment covering 437–446 (AVTEEAGATG) has biased composition (low complexity). Residues 437–466 (AVTEEAGATGEARKVGKAEEAEEAGPAKTL) form a disordered region. Glutamate 598 contributes to the L-isoleucyl-5'-AMP binding site. The 'KMSKS' region motif lies at 639 to 643 (KMSKS). ATP is bound at residue lysine 642. The Zn(2+) site is built by cysteine 922, cysteine 925, cysteine 942, and cysteine 945.

It belongs to the class-I aminoacyl-tRNA synthetase family. IleS type 1 subfamily. As to quaternary structure, monomer. Requires Zn(2+) as cofactor.

The protein localises to the cytoplasm. It catalyses the reaction tRNA(Ile) + L-isoleucine + ATP = L-isoleucyl-tRNA(Ile) + AMP + diphosphate. Functionally, catalyzes the attachment of isoleucine to tRNA(Ile). As IleRS can inadvertently accommodate and process structurally similar amino acids such as valine, to avoid such errors it has two additional distinct tRNA(Ile)-dependent editing activities. One activity is designated as 'pretransfer' editing and involves the hydrolysis of activated Val-AMP. The other activity is designated 'posttransfer' editing and involves deacylation of mischarged Val-tRNA(Ile). This chain is Isoleucine--tRNA ligase 2, found in Burkholderia mallei (strain ATCC 23344).